A 118-amino-acid chain; its full sequence is MTVLSQAHCEACRADAPKVSEQELADLIRQIPDWRVENRDGILQLEKVFAFRNFARALAFTDAVGALAEAEGHHPALLTEWGRVTVTWWTHKIRGLHRNDFIMAARTDELAKGAEDRA.

It belongs to the pterin-4-alpha-carbinolamine dehydratase family.

It catalyses the reaction (4aS,6R)-4a-hydroxy-L-erythro-5,6,7,8-tetrahydrobiopterin = (6R)-L-erythro-6,7-dihydrobiopterin + H2O. The polypeptide is Putative pterin-4-alpha-carbinolamine dehydratase (Azotobacter vinelandii (strain DJ / ATCC BAA-1303)).